Reading from the N-terminus, the 141-residue chain is Nucleoside triphosphatase NudI (141 aa).

The 141-residue stretch at 1–141 (MRQRTIVCPL…RHTLALKGLL (141 aa)) folds into the Nudix hydrolase domain. Positions 38-59 (GGVEPGERIEEALRREVREELG) match the Nudix box motif.

The protein belongs to the Nudix hydrolase family. NudI subfamily. In terms of assembly, monomer. The cofactor is Mg(2+).

The enzyme catalyses a ribonucleoside 5'-triphosphate + H2O = a ribonucleoside 5'-phosphate + diphosphate + H(+). It catalyses the reaction a 2'-deoxyribonucleoside 5'-triphosphate + H2O = a 2'-deoxyribonucleoside 5'-phosphate + diphosphate + H(+). It carries out the reaction dUTP + H2O = dUMP + diphosphate + H(+). The catalysed reaction is dTTP + H2O = dTMP + diphosphate + H(+). The enzyme catalyses dCTP + H2O = dCMP + diphosphate + H(+). Functionally, catalyzes the hydrolysis of nucleoside triphosphates, with a preference for pyrimidine deoxynucleoside triphosphates (dUTP, dTTP and dCTP). The chain is Nucleoside triphosphatase NudI from Salmonella schwarzengrund (strain CVM19633).